The chain runs to 91 residues: ATP synthase subunit c 1 (91 aa).

2 helical membrane-spanning segments follow: residues 4-24 (FTMCVFGAAIGMAIGTLGTAI) and 53-73 (IGLAMIESLAIYALVVCLIIL).

It belongs to the ATPase C chain family. As to quaternary structure, F-type ATPases have 2 components, F(1) - the catalytic core - and F(0) - the membrane proton channel. F(1) has five subunits: alpha(3), beta(3), gamma(1), delta(1), epsilon(1). F(0) has three main subunits: a(1), b(2) and c(10-14). The alpha and beta chains form an alternating ring which encloses part of the gamma chain. F(1) is attached to F(0) by a central stalk formed by the gamma and epsilon chains, while a peripheral stalk is formed by the delta and b chains.

The protein resides in the cell inner membrane. Its function is as follows. F(1)F(0) ATP synthase produces ATP from ADP in the presence of a proton or sodium gradient. F-type ATPases consist of two structural domains, F(1) containing the extramembraneous catalytic core and F(0) containing the membrane proton channel, linked together by a central stalk and a peripheral stalk. During catalysis, ATP synthesis in the catalytic domain of F(1) is coupled via a rotary mechanism of the central stalk subunits to proton translocation. In terms of biological role, key component of the F(0) channel; it plays a direct role in translocation across the membrane. A homomeric c-ring of between 10-14 subunits forms the central stalk rotor element with the F(1) delta and epsilon subunits. This chain is ATP synthase subunit c 1, found in Pelobacter propionicus (strain DSM 2379 / NBRC 103807 / OttBd1).